Here is a 228-residue protein sequence, read N- to C-terminus: Ribosomal RNA small subunit methyltransferase G (228 aa).

S-adenosyl-L-methionine-binding positions include glycine 89, leucine 94, valine 140–glutamate 141, and arginine 159.

This sequence belongs to the methyltransferase superfamily. RNA methyltransferase RsmG family.

The protein localises to the cytoplasm. It carries out the reaction guanosine(527) in 16S rRNA + S-adenosyl-L-methionine = N(7)-methylguanosine(527) in 16S rRNA + S-adenosyl-L-homocysteine. Functionally, specifically methylates the N7 position of guanine in position 527 of 16S rRNA. In Burkholderia ambifaria (strain ATCC BAA-244 / DSM 16087 / CCUG 44356 / LMG 19182 / AMMD) (Burkholderia cepacia (strain AMMD)), this protein is Ribosomal RNA small subunit methyltransferase G.